Here is a 126-residue protein sequence, read N- to C-terminus: Large ribosomal subunit protein uL22 (126 aa).

It belongs to the universal ribosomal protein uL22 family. As to quaternary structure, part of the 50S ribosomal subunit.

Functionally, this protein binds specifically to 23S rRNA; its binding is stimulated by other ribosomal proteins, e.g. L4, L17, and L20. It is important during the early stages of 50S assembly. It makes multiple contacts with different domains of the 23S rRNA in the assembled 50S subunit and ribosome. Its function is as follows. The globular domain of the protein is located near the polypeptide exit tunnel on the outside of the subunit, while an extended beta-hairpin is found that lines the wall of the exit tunnel in the center of the 70S ribosome. The chain is Large ribosomal subunit protein uL22 from Caulobacter vibrioides (strain ATCC 19089 / CIP 103742 / CB 15) (Caulobacter crescentus).